Reading from the N-terminus, the 346-residue chain is uncharacterized protein (346 aa).

This is an uncharacterized protein from Acanthamoeba polyphaga (Amoeba).